The sequence spans 598 residues: UvrABC system protein C (598 aa).

Residues 14–91 (DSPGCYLHKD…IQKNMPKYNI (78 aa)) form the GIY-YIG domain. A UVR domain is found at 196–231 (DKIIEDLRSKMLAASEEMAFERAAEYRDLISGIATM).

Belongs to the UvrC family. Interacts with UvrB in an incision complex.

The protein resides in the cytoplasm. Functionally, the UvrABC repair system catalyzes the recognition and processing of DNA lesions. UvrC both incises the 5' and 3' sides of the lesion. The N-terminal half is responsible for the 3' incision and the C-terminal half is responsible for the 5' incision. The polypeptide is UvrABC system protein C (Streptococcus pyogenes serotype M12 (strain MGAS2096)).